A 545-amino-acid polypeptide reads, in one-letter code: CTP synthase (545 aa).

Positions 1-266 are amidoligase domain; that stretch reads MATNYIFVTG…DSFVCDRFRL (266 aa). Ser-14 contributes to the CTP binding site. Ser-14 is a UTP binding site. Residues 15-20 and Asp-72 each bind ATP; that span reads SLGKGI. Mg(2+) contacts are provided by Asp-72 and Glu-140. CTP is bound by residues 147 to 149, 187 to 192, and Lys-223; these read DIE and KTKPTQ. UTP contacts are provided by residues 187–192 and Lys-223; that span reads KTKPTQ. An ATP-binding site is contributed by 239-241; sequence KDV. Residues 291 to 542 enclose the Glutamine amidotransferase type-1 domain; the sequence is TIGMVGKYVE…VAAAKAYQDS (252 aa). Residue Gly-352 coordinates L-glutamine. The Nucleophile; for glutamine hydrolysis role is filled by Cys-379. L-glutamine-binding positions include 380 to 383, Glu-403, and Arg-470; that span reads LGMQ. Residues His-515 and Glu-517 contribute to the active site.

This sequence belongs to the CTP synthase family. As to quaternary structure, homotetramer.

It catalyses the reaction UTP + L-glutamine + ATP + H2O = CTP + L-glutamate + ADP + phosphate + 2 H(+). The catalysed reaction is L-glutamine + H2O = L-glutamate + NH4(+). It carries out the reaction UTP + NH4(+) + ATP = CTP + ADP + phosphate + 2 H(+). It participates in pyrimidine metabolism; CTP biosynthesis via de novo pathway; CTP from UDP: step 2/2. Allosterically activated by GTP, when glutamine is the substrate; GTP has no effect on the reaction when ammonia is the substrate. The allosteric effector GTP functions by stabilizing the protein conformation that binds the tetrahedral intermediate(s) formed during glutamine hydrolysis. Inhibited by the product CTP, via allosteric rather than competitive inhibition. In terms of biological role, catalyzes the ATP-dependent amination of UTP to CTP with either L-glutamine or ammonia as the source of nitrogen. Regulates intracellular CTP levels through interactions with the four ribonucleotide triphosphates. This is CTP synthase from Haemophilus ducreyi (strain 35000HP / ATCC 700724).